The chain runs to 193 residues: Ion-translocating oxidoreductase complex subunit A (193 aa).

A run of 6 helical transmembrane segments spans residues 5–25 (LLLL…FLGL), 39–59 (VGMG…SYLM), 63–83 (ILIP…VIAV), 102–122 (LLGI…VALL), 134–154 (IIYG…FAAM), and 171–191 (SIAM…TGLI).

The protein belongs to the NqrDE/RnfAE family. In terms of assembly, the complex is composed of six subunits: RnfA, RnfB, RnfC, RnfD, RnfE and RnfG.

The protein resides in the cell inner membrane. Its function is as follows. Part of a membrane-bound complex that couples electron transfer with translocation of ions across the membrane. The polypeptide is Ion-translocating oxidoreductase complex subunit A (Aeromonas salmonicida (strain A449)).